We begin with the raw amino-acid sequence, 175 residues long: Large ribosomal subunit protein uL10 (175 aa).

The protein belongs to the universal ribosomal protein uL10 family. Part of the ribosomal stalk of the 50S ribosomal subunit. The N-terminus interacts with L11 and the large rRNA to form the base of the stalk. The C-terminus forms an elongated spine to which L12 dimers bind in a sequential fashion forming a multimeric L10(L12)X complex.

Its function is as follows. Forms part of the ribosomal stalk, playing a central role in the interaction of the ribosome with GTP-bound translation factors. This is Large ribosomal subunit protein uL10 from Prochlorococcus marinus (strain MIT 9515).